The chain runs to 58 residues: MLGWTLVFLVVAVIAGLFGFTGIAGAAAGIAKIIFFLFIVLLVISLLINALKGKSPRL.

2 helical membrane passes run L6–A26 and A28–I48.

This sequence belongs to the UPF0391 family.

The protein localises to the cell membrane. The protein is UPF0391 membrane protein Shew185_1413 of Shewanella baltica (strain OS185).